The following is a 334-amino-acid chain: Heat-inducible transcription repressor HrcA (334 aa).

This sequence belongs to the HrcA family.

Functionally, negative regulator of class I heat shock genes (grpE-dnaK-dnaJ and groELS operons). Prevents heat-shock induction of these operons. The polypeptide is Heat-inducible transcription repressor HrcA (Acidovorax sp. (strain JS42)).